Consider the following 364-residue polypeptide: Peroxisome biogenesis protein 3-2 (364 aa).

A helical transmembrane segment spans residues V15 to Y32. The stretch at N33 to A62 forms a coiled coil.

It belongs to the peroxin-3 family.

It is found in the peroxisome membrane. In terms of biological role, involved in morphology determination of peroxisomes, but not in import of peroxisomal matrix proteins. May act as a docking factor for PEX19 and be necessary for the import of peroxisomal membrane proteins in the peroxisomes. The sequence is that of Peroxisome biogenesis protein 3-2 (PEX3-2) from Arabidopsis thaliana (Mouse-ear cress).